Here is a 118-residue protein sequence, read N- to C-terminus: MNALNQAHCEACRADAPKVTDEELAELIREIPDWNIEVRDGHMELERVFLFKNFKHALAFTNAVGEIAEAEGHHPGLLTEWGKVTVTWWSHSIKGLHRNDFIMCARTDKVAEVAEGRK.

This sequence belongs to the pterin-4-alpha-carbinolamine dehydratase family.

The catalysed reaction is (4aS,6R)-4a-hydroxy-L-erythro-5,6,7,8-tetrahydrobiopterin = (6R)-L-erythro-6,7-dihydrobiopterin + H2O. This is Putative pterin-4-alpha-carbinolamine dehydratase from Pseudomonas putida (strain GB-1).